A 276-amino-acid chain; its full sequence is Diaminopimelate epimerase (276 aa).

Substrate-binding residues include Asn13, Gln46, and Asn66. Cys75 acts as the Proton donor in catalysis. Residues 76 to 77 (GN), Asn159, Asn192, and 210 to 211 (ER) contribute to the substrate site. The active-site Proton acceptor is Cys219. Substrate is bound at residue 220 to 221 (GS).

This sequence belongs to the diaminopimelate epimerase family. Homodimer.

The protein resides in the cytoplasm. The enzyme catalyses (2S,6S)-2,6-diaminopimelate = meso-2,6-diaminopimelate. The protein operates within amino-acid biosynthesis; L-lysine biosynthesis via DAP pathway; DL-2,6-diaminopimelate from LL-2,6-diaminopimelate: step 1/1. Its function is as follows. Catalyzes the stereoinversion of LL-2,6-diaminopimelate (L,L-DAP) to meso-diaminopimelate (meso-DAP), a precursor of L-lysine and an essential component of the bacterial peptidoglycan. This is Diaminopimelate epimerase from Vibrio vulnificus (strain CMCP6).